A 130-amino-acid polypeptide reads, in one-letter code: DNA-directed RNA polymerase subunit omega (130 aa).

The disordered stretch occupies residues 110-130 (EELLKGLEGLAPPEEQPEEDE).

The protein belongs to the RNA polymerase subunit omega family. In terms of assembly, the RNAP catalytic core consists of 2 alpha, 1 beta, 1 beta' and 1 omega subunit. When a sigma factor is associated with the core the holoenzyme is formed, which can initiate transcription.

The catalysed reaction is RNA(n) + a ribonucleoside 5'-triphosphate = RNA(n+1) + diphosphate. Functionally, promotes RNA polymerase assembly. Latches the N- and C-terminal regions of the beta' subunit thereby facilitating its interaction with the beta and alpha subunits. The polypeptide is DNA-directed RNA polymerase subunit omega (Bradyrhizobium sp. (strain BTAi1 / ATCC BAA-1182)).